A 205-amino-acid polypeptide reads, in one-letter code: Small ribosomal subunit protein uS4 (205 aa).

A disordered region spans residues 1 to 44 (MSKRHSQKYKIDRRMGENLWGRPKSPVNSRSYGPGQHGQRRKTK). An S4 RNA-binding domain is found at 94–173 (SRLDAIVYRC…LPEYIDLDAK (80 aa)).

Belongs to the universal ribosomal protein uS4 family. As to quaternary structure, part of the 30S ribosomal subunit. Contacts protein S5. The interaction surface between S4 and S5 is involved in control of translational fidelity.

Functionally, one of the primary rRNA binding proteins, it binds directly to 16S rRNA where it nucleates assembly of the body of the 30S subunit. With S5 and S12 plays an important role in translational accuracy. The chain is Small ribosomal subunit protein uS4 from Maricaulis maris (strain MCS10) (Caulobacter maris).